Consider the following 91-residue polypeptide: Small ribosomal subunit protein uS19 (91 aa).

The protein belongs to the universal ribosomal protein uS19 family.

Functionally, protein S19 forms a complex with S13 that binds strongly to the 16S ribosomal RNA. The sequence is that of Small ribosomal subunit protein uS19 from Colwellia psychrerythraea (strain 34H / ATCC BAA-681) (Vibrio psychroerythus).